The sequence spans 100 residues: Integration host factor subunit alpha (100 aa).

The interval 53–72 (FDLRDKRQRPGRNPKTGEEI) is disordered.

The protein belongs to the bacterial histone-like protein family. As to quaternary structure, heterodimer of an alpha and a beta chain.

This protein is one of the two subunits of integration host factor, a specific DNA-binding protein that functions in genetic recombination as well as in transcriptional and translational control. This Pseudomonas putida (strain ATCC 700007 / DSM 6899 / JCM 31910 / BCRC 17059 / LMG 24140 / F1) protein is Integration host factor subunit alpha.